The following is a 401-amino-acid chain: tRNA (guanine-N(7)-)-methyltransferase non-catalytic subunit wuho (401 aa).

The segment at 45–85 (KGRPRKYFDADSDSDEEQQNGDEPGTGKNNGGGDTGKKDQD) is disordered. The span at 54–64 (ADSDSDEEQQN) shows a compositional bias: acidic residues. WD repeat units lie at residues 86–125 (DQTN…RTLK), 174–213 (GHMS…NIET), and 217–255 (GHTE…ELAR).

This sequence belongs to the WD repeat TRM82 family. Forms a heterodimer with the catalytic subunit.

It localises to the nucleus. It functions in the pathway tRNA modification; N(7)-methylguanine-tRNA biosynthesis. Required for the formation of N(7)-methylguanine at position 46 (m7G46) in tRNA. In the complex, it is required to stabilize and induce conformational changes of the catalytic subunit. In Culex quinquefasciatus (Southern house mosquito), this protein is tRNA (guanine-N(7)-)-methyltransferase non-catalytic subunit wuho.